The sequence spans 313 residues: Ribosomal RNA small subunit methyltransferase H (313 aa).

Residues glycine 35 to histidine 37, aspartate 55, phenylalanine 79, aspartate 100, and glutamine 107 contribute to the S-adenosyl-L-methionine site.

It belongs to the methyltransferase superfamily. RsmH family.

It localises to the cytoplasm. It carries out the reaction cytidine(1402) in 16S rRNA + S-adenosyl-L-methionine = N(4)-methylcytidine(1402) in 16S rRNA + S-adenosyl-L-homocysteine + H(+). Specifically methylates the N4 position of cytidine in position 1402 (C1402) of 16S rRNA. The polypeptide is Ribosomal RNA small subunit methyltransferase H (Burkholderia orbicola (strain MC0-3)).